The chain runs to 147 residues: Large ribosomal subunit protein bL21 (147 aa).

The interval 125 to 147 is disordered; sequence EEVEAAPKAKKAAPKAKKEATKE.

This sequence belongs to the bacterial ribosomal protein bL21 family. Part of the 50S ribosomal subunit. Contacts protein L20.

This protein binds to 23S rRNA in the presence of protein L20. The chain is Large ribosomal subunit protein bL21 from Flavobacterium johnsoniae (strain ATCC 17061 / DSM 2064 / JCM 8514 / BCRC 14874 / CCUG 350202 / NBRC 14942 / NCIMB 11054 / UW101) (Cytophaga johnsonae).